The sequence spans 357 residues: Protein RecA (357 aa).

Position 71–78 (71–78) interacts with ATP; sequence GPESSGKT.

It belongs to the RecA family.

It is found in the cytoplasm. Its function is as follows. Can catalyze the hydrolysis of ATP in the presence of single-stranded DNA, the ATP-dependent uptake of single-stranded DNA by duplex DNA, and the ATP-dependent hybridization of homologous single-stranded DNAs. It interacts with LexA causing its activation and leading to its autocatalytic cleavage. The chain is Protein RecA from Ehrlichia chaffeensis (strain ATCC CRL-10679 / Arkansas).